Consider the following 551-residue polypeptide: Glucans biosynthesis protein D (551 aa).

Positions 1-32 (MDRRRFIKGSMAMAAVCGTSGIASLFSQAAFA) form a signal peptide, tat-type signal.

This sequence belongs to the OpgD/OpgG family. In terms of processing, predicted to be exported by the Tat system. The position of the signal peptide cleavage has not been experimentally proven.

It is found in the periplasm. It functions in the pathway glycan metabolism; osmoregulated periplasmic glucan (OPG) biosynthesis. Probably involved in the control of the structural glucose backbone of osmoregulated periplasmic glucans (OPGs). In Escherichia coli O9:H4 (strain HS), this protein is Glucans biosynthesis protein D.